The following is a 684-amino-acid chain: Pentatricopeptide repeat-containing protein At4g14850 (684 aa).

PPR repeat units lie at residues 5–39 (SADA…LDSP), 41–71 (PPFL…TPAR), 72–106 (NVVS…GVVP), 107–141 (NDFT…GRIL), 142–172 (DVFV…IPER), 173–207 (NLET…DGHP), 208–242 (NSIT…GFDT), 243–277 (DVSV…NAVS), 278–308 (WCSL…IVET), 309–343 (SDFM…CVER), 344–374 (TIFV…MPEK), 375–409 (NLVT…GCGP), 412–442 (NYMT…MRST), and 448–478 (GAEH…MPIQ). The tract at residues 483-558 (VWGALQNACR…GAGYSWITVK (76 aa)) is type E motif; degenerate. The type E(+) motif; degenerate stretch occupies residues 559–589 (NQVHAFQAKDRSHILNKEIQTTLAKLRNEME). The interval 590–684 (AAGYKPDLKL…DGICSCKDYW (95 aa)) is type DYW motif.

It belongs to the PPR family. PCMP-H subfamily.

Functionally, acts as a regulatory factor of isoprenoid biosynthesis. Could bind RNA. The chain is Pentatricopeptide repeat-containing protein At4g14850 (LOI1) from Arabidopsis thaliana (Mouse-ear cress).